Here is a 224-residue protein sequence, read N- to C-terminus: Protein GrpE (224 aa).

Composition is skewed to polar residues over residues methionine 1–serine 16 and glutamate 209–alanine 224. 2 disordered regions span residues methionine 1–valine 35 and serine 203–alanine 224.

Belongs to the GrpE family. Homodimer.

The protein localises to the cytoplasm. Its function is as follows. Participates actively in the response to hyperosmotic and heat shock by preventing the aggregation of stress-denatured proteins, in association with DnaK and GrpE. It is the nucleotide exchange factor for DnaK and may function as a thermosensor. Unfolded proteins bind initially to DnaJ; upon interaction with the DnaJ-bound protein, DnaK hydrolyzes its bound ATP, resulting in the formation of a stable complex. GrpE releases ADP from DnaK; ATP binding to DnaK triggers the release of the substrate protein, thus completing the reaction cycle. Several rounds of ATP-dependent interactions between DnaJ, DnaK and GrpE are required for fully efficient folding. The protein is Protein GrpE of Synechococcus sp. (strain CC9902).